The following is a 405-amino-acid chain: L-rhamnonate dehydratase (405 aa).

Substrate contacts are provided by His-33 and Arg-59. Mg(2+)-binding residues include Asp-226, Glu-252, and Glu-280. Catalysis depends on His-329, which acts as the Proton acceptor. Residue Glu-349 coordinates substrate.

Belongs to the mandelate racemase/muconate lactonizing enzyme family. RhamD subfamily. As to quaternary structure, homooctamer; tetramer of dimers. Mg(2+) is required as a cofactor.

It carries out the reaction L-rhamnonate = 2-dehydro-3-deoxy-L-rhamnonate + H2O. In terms of biological role, catalyzes the dehydration of L-rhamnonate to 2-keto-3-deoxy-L-rhamnonate (KDR). The polypeptide is L-rhamnonate dehydratase (Salmonella paratyphi A (strain AKU_12601)).